A 161-amino-acid chain; its full sequence is Thy-1 membrane glycoprotein (161 aa).

Positions 1–19 (MNPVISITLLLSVLQMSRG) are cleaved as a signal peptide. Pyrrolidone carboxylic acid is present on glutamine 20. The region spanning 20–126 (QRVISLTACL…NKTINVIRDK (107 aa)) is the Ig-like V-type domain. 2 cysteine pairs are disulfide-bonded: cysteine 28–cysteine 130 and cysteine 38–cysteine 104. An N-linked (GlcNAc...) (complex) asparagine; alternate glycan is attached at asparagine 42. Asparagine 42 carries N-linked (GlcNAc...) (high mannose) asparagine; alternate glycosylation. An N-linked (GlcNAc...) asparagine; alternate glycan is attached at asparagine 42. Serine 82 bears the Phosphoserine mark. An N-linked (GlcNAc...) (complex) asparagine; alternate glycan is attached at asparagine 93. An N-linked (GlcNAc...) asparagine; alternate glycan is attached at asparagine 93. Residue asparagine 117 is glycosylated (N-linked (GlcNAc...) (high mannose) asparagine; in brain; alternate). N-linked (GlcNAc...) (hybrid) asparagine; in brain; alternate glycosylation is present at asparagine 117. Cysteine 130 carries the GPI-anchor amidated cysteine lipid modification. Residues 131–161 (GGISLLVQNTSWLLLLLLSLSFLQATDFISL) constitute a propeptide, removed in mature form.

In terms of processing, glycosylation is tissue specific. Sialylation of N-glycans at Asn-93 in brain and at Asn-42, Asn-93 and Asn-117 in thymus. As to expression, abundant in lymphoid tissues.

The protein resides in the cell membrane. May play a role in cell-cell or cell-ligand interactions during synaptogenesis and other events in the brain. The chain is Thy-1 membrane glycoprotein (Thy1) from Rattus norvegicus (Rat).